We begin with the raw amino-acid sequence, 306 residues long: Protein STPG3 (306 aa).

Positions 210 to 230 are disordered; it reads CSYTPLLPTSKPSGEKRPSPN.

The chain is Protein STPG3 from Mus musculus (Mouse).